A 96-amino-acid polypeptide reads, in one-letter code: C-C motif chemokine 20 (96 aa).

Residues 1-26 (MMCSSKNLLLAALMSVLLLHFCSKSE) form the signal peptide. Intrachain disulfides connect C32–C58 and C33–C74.

Belongs to the intercrine beta (chemokine CC) family.

It localises to the secreted. Its function is as follows. Acts as a ligand for C-C chemokine receptor CCR6. Signals through binding and activation of CCR6 and induces a strong chemotactic response and mobilization of intracellular calcium ions. The ligand-receptor pair CCL20-CCR6 is responsible for the chemotaxis of dendritic cells (DC), effector/memory T-cells and B-cells and plays an important role at skin and mucosal surfaces under homeostatic and inflammatory conditions, as well as in pathology, including cancer and autoimmune diseases. CCL20 acts as a chemotactic factor that attracts lymphocytes and, slightly, neutrophils, but not monocytes. Involved in the recruitment of both the pro-inflammatory IL17 producing helper T-cells (Th17) and the regulatory T-cells (Treg) to sites of inflammation. Required for optimal migration of thymic natural regulatory T cells (nTregs) and DN1 early thymocyte progenitor cells. Positively regulates sperm motility and chemotaxis via its binding to CCR6 which triggers Ca2+ mobilization in the sperm which is important for its motility. May be involved in formation and function of the mucosal lymphoid tissues by attracting lymphocytes and dendritic cells towards epithelial cells. The chain is C-C motif chemokine 20 (CCL20) from Bos taurus (Bovine).